We begin with the raw amino-acid sequence, 409 residues long: Tryptophan synthase beta chain (409 aa).

Residue K95 is modified to N6-(pyridoxal phosphate)lysine.

This sequence belongs to the TrpB family. As to quaternary structure, tetramer of two alpha and two beta chains. It depends on pyridoxal 5'-phosphate as a cofactor.

The catalysed reaction is (1S,2R)-1-C-(indol-3-yl)glycerol 3-phosphate + L-serine = D-glyceraldehyde 3-phosphate + L-tryptophan + H2O. Its pathway is amino-acid biosynthesis; L-tryptophan biosynthesis; L-tryptophan from chorismate: step 5/5. In terms of biological role, the beta subunit is responsible for the synthesis of L-tryptophan from indole and L-serine. The protein is Tryptophan synthase beta chain of Pseudomonas syringae pv. tomato (strain ATCC BAA-871 / DC3000).